The following is a 211-amino-acid chain: Late expression factor 7 (211 aa).

Its function is as follows. Involved in late/very late gene activation. In Orgyia pseudotsugata multicapsid polyhedrosis virus (OpMNPV), this protein is Late expression factor 7 (LEF-7).